The primary structure comprises 296 residues: Glycerol-3-phosphate dehydrogenase [NAD(P)+] (296 aa).

Positions 12, 31, and 80 each coordinate NADPH. The sn-glycerol 3-phosphate site is built by lysine 80, glycine 108, and serine 110. Residue alanine 112 participates in NADPH binding. Sn-glycerol 3-phosphate-binding residues include lysine 162, aspartate 215, serine 225, arginine 226, and asparagine 227. Lysine 162 (proton acceptor) is an active-site residue. Arginine 226 is an NADPH binding site. NADPH is bound by residues valine 250 and glutamate 252.

It belongs to the NAD-dependent glycerol-3-phosphate dehydrogenase family.

The protein localises to the cytoplasm. It carries out the reaction sn-glycerol 3-phosphate + NAD(+) = dihydroxyacetone phosphate + NADH + H(+). The enzyme catalyses sn-glycerol 3-phosphate + NADP(+) = dihydroxyacetone phosphate + NADPH + H(+). It functions in the pathway membrane lipid metabolism; glycerophospholipid metabolism. Catalyzes the reduction of the glycolytic intermediate dihydroxyacetone phosphate (DHAP) to sn-glycerol 3-phosphate (G3P), the key precursor for phospholipid synthesis. This is Glycerol-3-phosphate dehydrogenase [NAD(P)+] from Sulfurimonas denitrificans (strain ATCC 33889 / DSM 1251) (Thiomicrospira denitrificans (strain ATCC 33889 / DSM 1251)).